A 330-amino-acid polypeptide reads, in one-letter code: Biotin synthase (330 aa).

The region spanning 53–276 (NNIRLNVLLS…VFPFKELRLS (224 aa)) is the Radical SAM core domain. Residues Cys68, Cys72, and Cys75 each coordinate [4Fe-4S] cluster. [2Fe-2S] cluster contacts are provided by Cys112, Cys144, Cys204, and Arg274.

Belongs to the radical SAM superfamily. Biotin synthase family. In terms of assembly, homodimer. It depends on [4Fe-4S] cluster as a cofactor. [2Fe-2S] cluster serves as cofactor.

It carries out the reaction (4R,5S)-dethiobiotin + (sulfur carrier)-SH + 2 reduced [2Fe-2S]-[ferredoxin] + 2 S-adenosyl-L-methionine = (sulfur carrier)-H + biotin + 2 5'-deoxyadenosine + 2 L-methionine + 2 oxidized [2Fe-2S]-[ferredoxin]. The protein operates within cofactor biosynthesis; biotin biosynthesis; biotin from 7,8-diaminononanoate: step 2/2. Its function is as follows. Catalyzes the conversion of dethiobiotin (DTB) to biotin by the insertion of a sulfur atom into dethiobiotin via a radical-based mechanism. In Streptococcus agalactiae serotype III (strain NEM316), this protein is Biotin synthase.